Consider the following 249-residue polypeptide: V-type proton ATPase subunit D 2 (249 aa).

This sequence belongs to the V-ATPase D subunit family. As to quaternary structure, V-ATPase is a heteromultimeric enzyme made up of two complexes: the ATP-hydrolytic V1 complex and the proton translocation V0 complex. The V1 complex consists of three catalytic AB heterodimers that form a heterohexamer, three peripheral stalks each consisting of EG heterodimers, one central rotor including subunits D and F, and the regulatory subunits C and H. The proton translocation complex V0 consists of the proton transport subunit a, a ring of proteolipid subunits c9c'', rotary subunit d, subunits e and f, and the accessory subunits VhaAC45 and ATP6AP2.

Functionally, subunit of the V1 complex of vacuolar(H+)-ATPase (V-ATPase), a multisubunit enzyme composed of a peripheral complex (V1) that hydrolyzes ATP and a membrane integral complex (V0) that translocates protons. V-ATPase is responsible for acidifying and maintaining the pH of intracellular compartments and in some cell types, is targeted to the plasma membrane, where it is responsible for acidifying the extracellular environment. This Drosophila melanogaster (Fruit fly) protein is V-type proton ATPase subunit D 2 (Vha36-3).